The chain runs to 336 residues: CASP-like protein UU1 (336 aa).

At 1–170 (MGKGPGLDPS…PAMESNKDDN (170 aa)) the chain is on the cytoplasmic side. Residues 171–191 (FFGAIVLSLRAAQIVFTVVGL) traverse the membrane as a helical segment. Topologically, residues 192–222 (GVMGSLKHTSHGDYYYYYYDFSFTQVDSYIG) are extracellular. A helical transmembrane segment spans residues 223 to 243 (VLSLDVIVCLYAIVQLVLCFI). Over 244 to 261 (QRSNQGKYLSSPTTVAAK) the chain is Cytoplasmic. Residues 262 to 282 (LTFVFDQVLAYALVATAGAAA) form a helical membrane-spanning segment. Topologically, residues 283–307 (GSALEIRKGTSCSGTWTVICSKGEA) are extracellular. A helical transmembrane segment spans residues 308–328 (SVAMSFFAFAFLAATAAVYSV). The Cytoplasmic portion of the chain corresponds to 329–336 (RLLRITGR).

The protein belongs to the Casparian strip membrane proteins (CASP) family. As to quaternary structure, homodimer and heterodimers.

Its subcellular location is the cell membrane. The polypeptide is CASP-like protein UU1 (Physcomitrium patens (Spreading-leaved earth moss)).